The chain runs to 330 residues: Phosphate acyltransferase (330 aa).

The protein belongs to the PlsX family. In terms of assembly, homodimer. Probably interacts with PlsY.

The protein localises to the cytoplasm. The catalysed reaction is a fatty acyl-[ACP] + phosphate = an acyl phosphate + holo-[ACP]. It participates in lipid metabolism; phospholipid metabolism. Functionally, catalyzes the reversible formation of acyl-phosphate (acyl-PO(4)) from acyl-[acyl-carrier-protein] (acyl-ACP). This enzyme utilizes acyl-ACP as fatty acyl donor, but not acyl-CoA. In Streptococcus pneumoniae (strain 70585), this protein is Phosphate acyltransferase.